We begin with the raw amino-acid sequence, 309 residues long: uncharacterized protein (309 aa).

Pro residues-rich tracts occupy residues 1 to 17 (MTSR…PSPP) and 24 to 51 (SPVP…PTPR). 2 disordered regions span residues 1–174 (MTSR…PPGV) and 216–240 (PPDL…PLHA). The segment covering 67-83 (LRSSPSSALNASRGAPS) has biased composition (low complexity). The segment covering 84 to 112 (TSPPPSSSPPSSPASTPPSRTPSPTPTAP) has biased composition (pro residues). Low complexity-rich tracts occupy residues 113 to 125 (ASPV…TPAS) and 135 to 144 (APSSSAALSS). The segment covering 160 to 174 (PPPPLPPPLQPPPGV) has biased composition (pro residues). A helical membrane pass occupies residues 278 to 298 (LFLLFTLLSIHFSPFPIFILL).

The protein localises to the host membrane. This is an uncharacterized protein from Vitis vinifera (Grape).